Here is a 478-residue protein sequence, read N- to C-terminus: Ribulose bisphosphate carboxylase large chain (478 aa).

Residues 1–2 constitute a propeptide that is removed on maturation; the sequence is MS. P3 is subject to N-acetylproline. An N6,N6,N6-trimethyllysine modification is found at K14. Substrate is bound by residues N123 and T173. The active-site Proton acceptor is the K175. Residue K177 coordinates substrate. Positions 201, 203, and 204 each coordinate Mg(2+). An N6-carboxylysine modification is found at K201. The active-site Proton acceptor is the H294. Residues R295, H327, and S379 each contribute to the substrate site.

Belongs to the RuBisCO large chain family. Type I subfamily. Heterohexadecamer of 8 large chains and 8 small chains; disulfide-linked. The disulfide link is formed within the large subunit homodimers. Requires Mg(2+) as cofactor. Post-translationally, the disulfide bond which can form in the large chain dimeric partners within the hexadecamer appears to be associated with oxidative stress and protein turnover.

The protein resides in the plastid. Its subcellular location is the chloroplast. It carries out the reaction 2 (2R)-3-phosphoglycerate + 2 H(+) = D-ribulose 1,5-bisphosphate + CO2 + H2O. The catalysed reaction is D-ribulose 1,5-bisphosphate + O2 = 2-phosphoglycolate + (2R)-3-phosphoglycerate + 2 H(+). Its function is as follows. RuBisCO catalyzes two reactions: the carboxylation of D-ribulose 1,5-bisphosphate, the primary event in carbon dioxide fixation, as well as the oxidative fragmentation of the pentose substrate in the photorespiration process. Both reactions occur simultaneously and in competition at the same active site. The chain is Ribulose bisphosphate carboxylase large chain from Drimys granadensis.